The chain runs to 70 residues: Protein SlyX homolog (70 aa).

The protein belongs to the SlyX family.

In Shewanella piezotolerans (strain WP3 / JCM 13877), this protein is Protein SlyX homolog.